The chain runs to 879 residues: Alanine--tRNA ligase (879 aa).

Positions 570, 574, 672, and 676 each coordinate Zn(2+).

This sequence belongs to the class-II aminoacyl-tRNA synthetase family. Zn(2+) is required as a cofactor.

Its subcellular location is the cytoplasm. It carries out the reaction tRNA(Ala) + L-alanine + ATP = L-alanyl-tRNA(Ala) + AMP + diphosphate. Its function is as follows. Catalyzes the attachment of alanine to tRNA(Ala) in a two-step reaction: alanine is first activated by ATP to form Ala-AMP and then transferred to the acceptor end of tRNA(Ala). Also edits incorrectly charged Ser-tRNA(Ala) and Gly-tRNA(Ala) via its editing domain. The chain is Alanine--tRNA ligase from Nitratidesulfovibrio vulgaris (strain ATCC 29579 / DSM 644 / CCUG 34227 / NCIMB 8303 / VKM B-1760 / Hildenborough) (Desulfovibrio vulgaris).